Here is a 313-residue protein sequence, read N- to C-terminus: Kazal-type serine protease inhibitor domain-containing protein 1 (313 aa).

An N-terminal signal peptide occupies residues 1-37 (MPRVFTGLPANYAAPTLALSLLLPLLLVVWTQLPVSA). An IGFBP N-terminal domain is found at 56–136 (EGEGCAPCRP…EVPEPLCVCR (81 aa)). Disulfide bonds link Cys-60/Cys-83, Cys-63/Cys-85, Cys-68/Cys-86, Cys-74/Cys-89, Cys-97/Cys-115, Cys-109/Cys-133, and Cys-142/Cys-175. The 51-residue stretch at 127-177 (EVPEPLCVCRSQRPLCGSDGRTYAQICRLQEAARARLDANLTVVHPGPCES) folds into the Kazal-like domain. N-linked (GlcNAc...) asparagine glycans are attached at residues Asn-166 and Asn-190. Positions 179–276 (PQILSQPHNI…GQAEASATLT (98 aa)) constitute an Ig-like C2-type domain. The cysteines at positions 200 and 260 are disulfide-linked. Asn-284 carries an N-linked (GlcNAc...) asparagine glycan. The interval 290 to 313 (QLQSRSLFPEEEEEAESEELGDYY) is disordered. The span at 298–313 (PEEEEEAESEELGDYY) shows a compositional bias: acidic residues.

Highly expressed in the spleen. Moderately expressed in the skin, lung and urinary bladder. Weakly expressed in the brain, tongue, esophagus, stomach, large intestine, liver and bone. Expressed in osteoblastic cells during bone regeneration. Expressed in secretory osteoblasts in the tooth.

Its subcellular location is the secreted. The protein localises to the extracellular space. It localises to the extracellular matrix. Involved in the proliferation of osteoblasts during bone formation and bone regeneration. Promotes matrix assembly. This Mus musculus (Mouse) protein is Kazal-type serine protease inhibitor domain-containing protein 1 (Kazald1).